The following is a 189-amino-acid chain: Receptor activity-modifying protein 2 (189 aa).

The N-terminal stretch at 1 to 44 is a signal peptide; the sequence is MAPLRVERAPGGSRLGVTRAQRPTALCLPPLLLLLLLLLGAVSA. Over 45–157 the chain is Extracellular; it reads SPESLNQSLP…VQPTFSDPPE (113 aa). Positions 49-61 are enriched in polar residues; it reads LNQSLPESQNQSH. A disordered region spans residues 49 to 69; it reads LNQSLPESQNQSHPTEDSLVS. N50, N58, N99, and N144 each carry an N-linked (GlcNAc...) asparagine glycan. 2 cysteine pairs are disulfide-bonded: C83–C113 and C98–C145. The chain crosses the membrane as a helical span at residues 158 to 179; the sequence is DVLLAMIIAPICLIPFLVTLVV. Residues 180 to 189 are Cytoplasmic-facing; sequence WRSKDSDAQA.

It belongs to the RAMP family. As to quaternary structure, heterodimer of CALCRL and RAMP2; the interaction forms the receptor complex for adrenomedullin/ADM. Heterodimer of CALCR and RAMP2; interaction forms the AMYR2 receptor complex for calcitonin/CALC and amylin/IAPP. In terms of tissue distribution, ubiquitous. Expressed predominantly in embryonic brain, lung and gut and in adult heart, lung, skeletal muscle and brain.

The protein resides in the cell membrane. Functionally, accessory protein that interacts with and modulates the function of G-protein coupled receptors including calcitonin gene-related peptide type 1 receptor (CALCRL) and calcitonin receptor (CALCR). Required for the transport of CALCRL to the plasma membrane. Together with CALCRL, form a receptor complex for adrenomedullin/ADM. Together with CALCR, act as a receptor complex for calcitonin/CT/CALC. Together with CALCR, also act as a receptor complex for amylin/IAPP. This is Receptor activity-modifying protein 2 from Mus musculus (Mouse).